The chain runs to 244 residues: Ubiquinone biosynthesis O-methyltransferase (244 aa).

S-adenosyl-L-methionine is bound by residues arginine 36, glycine 60, aspartate 81, and leucine 123.

The protein belongs to the methyltransferase superfamily. UbiG/COQ3 family.

It carries out the reaction a 3-demethylubiquinol + S-adenosyl-L-methionine = a ubiquinol + S-adenosyl-L-homocysteine + H(+). It catalyses the reaction a 3-(all-trans-polyprenyl)benzene-1,2-diol + S-adenosyl-L-methionine = a 2-methoxy-6-(all-trans-polyprenyl)phenol + S-adenosyl-L-homocysteine + H(+). The protein operates within cofactor biosynthesis; ubiquinone biosynthesis. In terms of biological role, O-methyltransferase that catalyzes the 2 O-methylation steps in the ubiquinone biosynthetic pathway. This chain is Ubiquinone biosynthesis O-methyltransferase, found in Rickettsia felis (strain ATCC VR-1525 / URRWXCal2) (Rickettsia azadi).